Here is a 923-residue protein sequence, read N- to C-terminus: MRYHGICWFIFQAAIIFAIFGSCQGAFRHQFKTAEQDGFARRNRDLAKFQKENLNWNGLFQLNSISYNSGVVSGVFEQQSENGENQHLFPFSISFLKNDVVRFQMDEKSRLEGTVEYEKNILTKRRFDASTELGFNERAEVYGKDAHLLEQTSTSLTIRYGSHGRFTVIVTFSPFKVEFQRDGEPQVVLNERHLLNMEYYRPKSSRTPEQEANGMWDETFDNFHDSKPKGPESVGLDIKFVDYGNVYGVPEHTSSLSLKETNNSDAGYTEPYRLYNVDLFEYEVDSPMSQYGAIPFMQAHKPNSDVAVFWSNAAATWIDVEKESGPSPHSQSTSTHWYSESGTLDLFIFLGPKASDVYESYSALVGRPLLPPLFSIGYHQCRWNYVSEEDVLNVDAKFDEVDMPYDTIWLDIEYASKRRYFTWDKATFPNPKAMLEKLDSKSRKLIVILDPHIKNDPNYFVSKELIDYNYAVKDKSGVDNYNADCWPGNSVWVDFFNPEAQAWWGSLYEFDRFESDKNLWIWNDMNEPSVFRGPETSMHRDAIHYGGWEHRDIHNIYGHKCINGTYNGLIKRGEGAVRPFILTRSFFAGTSALAANWIGDTMTTWEHLRGSIPTVLTNGISGMAFSGADVAGFFGNPDAELFVRWYETAIFYPFFRAHAHIDTKRREPWLYGEPYTSLVRELLRIRYRLLPTWYTAFYNSHTHGFPILYPQFLMHPEDEEGFAIDDQFYVGDSGLLVKPVTHPSIDKITIYLADDEVYFDLHDHTEYAGKGHQVVPAPLGRVPVLLRGGNILITRERIRRAAELTRNDPFTLTIAVSKIGKNASGFLYLDDGVTFNYKKGEYLIRHFSYENGILTMKDSHSNPPVSPKYSSSQKHLKVERINIYGEQTRKSIKIRKIIDSEVTEWDVSVDDSGCIRNPQLFLV.

A signal peptide spans 1–25 (MRYHGICWFIFQAAIIFAIFGSCQG). Asparagine 262 carries an N-linked (GlcNAc...) asparagine glycan. The active-site Nucleophile is aspartate 524. Residue glutamate 527 is part of the active site. Asparagine 563 carries N-linked (GlcNAc...) asparagine glycosylation. Catalysis depends on aspartate 600, which acts as the Proton donor. Residue asparagine 822 is glycosylated (N-linked (GlcNAc...) asparagine).

Belongs to the glycosyl hydrolase 31 family. In terms of assembly, heterodimer of a catalytic subunit alpha (gls2) and a subunit beta (gtb1).

Its subcellular location is the endoplasmic reticulum. It carries out the reaction N(4)-(alpha-D-Glc-(1-&gt;3)-alpha-D-Man-(1-&gt;2)-alpha-D-Man-(1-&gt;2)-alpha-D-Man-(1-&gt;3)-[alpha-D-Man-(1-&gt;2)-alpha-D-Man-(1-&gt;3)-[alpha-D-Man-(1-&gt;2)-alpha-D-Man-(1-&gt;6)]-alpha-D-Man-(1-&gt;6)]-beta-D-Man-(1-&gt;4)-beta-D-GlcNAc-(1-&gt;4)-beta-D-GlcNAc)-L-asparaginyl-[protein] + H2O = N(4)-(alpha-D-Man-(1-&gt;2)-alpha-D-Man-(1-&gt;2)-alpha-D-Man-(1-&gt;3)-[alpha-D-Man-(1-&gt;2)-alpha-D-Man-(1-&gt;3)-[alpha-D-Man-(1-&gt;2)-alpha-D-Man-(1-&gt;6)]-alpha-D-Man-(1-&gt;6)]-beta-D-Man-(1-&gt;4)-beta-D-GlcNAc-(1-&gt;4)-beta-D-GlcNAc)-L-asparaginyl-[protein] (N-glucan mannose isomer 9A1,2,3B1,2,3) + beta-D-glucose. The catalysed reaction is N(4)-(alpha-D-Glc-(1-&gt;3)-alpha-D-Glc-(1-&gt;3)-alpha-D-Man-(1-&gt;2)-alpha-D-Man-(1-&gt;2)-alpha-D-Man-(1-&gt;3)-[alpha-D-Man-(1-&gt;2)-alpha-D-Man-(1-&gt;3)-[alpha-D-Man-(1-&gt;2)-alpha-D-Man-(1-&gt;6)]-alpha-D-Man-(1-&gt;6)]-beta-D-Man-(1-&gt;4)-beta-D-GlcNAc-(1-&gt;4)-beta-D-GlcNAc)-L-asparaginyl-[protein] + H2O = N(4)-(alpha-D-Glc-(1-&gt;3)-alpha-D-Man-(1-&gt;2)-alpha-D-Man-(1-&gt;2)-alpha-D-Man-(1-&gt;3)-[alpha-D-Man-(1-&gt;2)-alpha-D-Man-(1-&gt;3)-[alpha-D-Man-(1-&gt;2)-alpha-D-Man-(1-&gt;6)]-alpha-D-Man-(1-&gt;6)]-beta-D-Man-(1-&gt;4)-beta-D-GlcNAc-(1-&gt;4)-beta-D-GlcNAc)-L-asparaginyl-[protein] + beta-D-glucose. It participates in glycan metabolism; N-glycan metabolism. In terms of biological role, catalytic subunit of glucosidase 2, which cleaves sequentially the 2 innermost alpha-1,3-linked glucose residues from the Glc(2)Man(9)GlcNAc(2) oligosaccharide precursor of immature glycoproteins. The sequence is that of Glucosidase 2 subunit alpha from Schizosaccharomyces pombe (strain 972 / ATCC 24843) (Fission yeast).